An 844-amino-acid polypeptide reads, in one-letter code: RING finger containing E3 ubiquitin-protein ligase WSV222 (844 aa).

229–236 (AEDDKGKT) is a binding site for ATP. The RING-type; atypical zinc finger occupies 308-359 (CGVCATSVEEDENEGKTTSLSWYQMNCKHYIHCECLMGMCAAAGNVQCPMCR).

In terms of assembly, interacts with host UBE2E1/UBCH6; this interaction results in WSV222 auto-ubiquitination. Interacts with host tumor suppressor-like protein.

It carries out the reaction S-ubiquitinyl-[E2 ubiquitin-conjugating enzyme]-L-cysteine + [acceptor protein]-L-lysine = [E2 ubiquitin-conjugating enzyme]-L-cysteine + N(6)-ubiquitinyl-[acceptor protein]-L-lysine.. Its pathway is protein modification; protein ubiquitination. Functionally, probable E3 ubiquitin-protein ligase which accepts ubiquitin from the E2 ubiquitin-conjugating enzyme UBE2E1/UBCH6 in the form of a thioester and then directly transfers the ubiquitin to targeted substrates. Mediates ubiquitination of host tumor-suppressor-like protein (TSL) targeting it for degradation. Might function as an anti-apoptosis protein by counteracting TSL-induced apoptosis. In White spot syndrome virus (isolate Shrimp/China/Tongan/1996) (WSSV), this protein is RING finger containing E3 ubiquitin-protein ligase WSV222.